The primary structure comprises 280 residues: Beta-glucosyl-HMC-alpha-glucosyl-transferase (280 aa).

It functions in the pathway genetic information processing; DNA modification. In terms of biological role, transfers a gentiobiosyl-group on a hydroxymethylcytosine residue in DNA. Is involved in a DNA modification process to protects the phage genome against its own nucleases and the host restriction endonuclease system. In Enterobacteria phage T2 (Bacteriophage T2), this protein is Beta-glucosyl-HMC-alpha-glucosyl-transferase.